A 442-amino-acid polypeptide reads, in one-letter code: Probable glycine dehydrogenase (decarboxylating) subunit 1 (442 aa).

Belongs to the GcvP family. N-terminal subunit subfamily. In terms of assembly, the glycine cleavage system is composed of four proteins: P, T, L and H. In this organism, the P 'protein' is a heterodimer of two subunits.

The catalysed reaction is N(6)-[(R)-lipoyl]-L-lysyl-[glycine-cleavage complex H protein] + glycine + H(+) = N(6)-[(R)-S(8)-aminomethyldihydrolipoyl]-L-lysyl-[glycine-cleavage complex H protein] + CO2. Functionally, the glycine cleavage system catalyzes the degradation of glycine. The P protein binds the alpha-amino group of glycine through its pyridoxal phosphate cofactor; CO(2) is released and the remaining methylamine moiety is then transferred to the lipoamide cofactor of the H protein. The sequence is that of Probable glycine dehydrogenase (decarboxylating) subunit 1 from Geotalea uraniireducens (strain Rf4) (Geobacter uraniireducens).